A 470-amino-acid chain; its full sequence is Probable glycosyltransferase At3g07620 (470 aa).

Residues 1–7 are Cytoplasmic-facing; the sequence is MRDYIPK. A helical; Signal-anchor transmembrane segment spans residues 8–28; that stretch reads YLNAFLLAFATFAVGFAIFIA. Over 29–470 the chain is Lumenal; the sequence is KDSNSSSHLY…WLRRLNVKLL (442 aa). 6 N-linked (GlcNAc...) asparagine glycosylation sites follow: N32, N73, N105, N236, N274, and N299.

Belongs to the glycosyltransferase 47 family.

It is found in the golgi apparatus membrane. Its function is as follows. May be involved in cell wall biosynthesis. This chain is Probable glycosyltransferase At3g07620, found in Arabidopsis thaliana (Mouse-ear cress).